The following is a 146-amino-acid chain: Snaclec rhodocytin subunit beta (146 aa).

Positions 1–23 are cleaved as a signal peptide; sequence MGRFIFVSFGLLVVFLSLSGTGA. Disulfide bonds link Cys25-Cys36, Cys53-Cys142, and Cys119-Cys134. One can recognise a C-type lectin domain in the interval 32-143; that stretch reads YEGHCYKPFN…CSSTCSFVCK (112 aa).

Belongs to the snaclec family. Dimer (non-covalently linked) of heterodimers of subunits alpha and beta (disulfide-linked). As to expression, expressed by the venom gland.

Its subcellular location is the secreted. In terms of biological role, elicits platelet aggregation by the binding to the C-type lectin domain family 1 member B (CLEC1B/CLEC2). Binding leads to tyrosine phosphorylation in the cytoplasmic tail of CLEC1B, which promotes the binding of spleen tyrosine kinase (Syk), subsequent activation of PLCgamma2, and platelet activation and aggregation. Binding to GPIbalpha (GP1BA) and alpha2/beta-1 (ITGA2/ITGB1) may also induce aggregation, but this is controversial. The protein is Snaclec rhodocytin subunit beta of Calloselasma rhodostoma (Malayan pit viper).